A 506-amino-acid chain; its full sequence is Ribose import ATP-binding protein RbsA 2 (506 aa).

2 consecutive ABC transporter domains span residues 5–241 and 251–498; these read LRLS…VGRR and VRAA…TAGT. Residue 37 to 44 coordinates ATP; it reads GENGAGKS.

This sequence belongs to the ABC transporter superfamily. Ribose importer (TC 3.A.1.2.1) family. As to quaternary structure, the complex is composed of an ATP-binding protein (RbsA), two transmembrane proteins (RbsC) and a solute-binding protein (RbsB).

The protein resides in the cell inner membrane. The enzyme catalyses D-ribose(out) + ATP + H2O = D-ribose(in) + ADP + phosphate + H(+). Its function is as follows. Part of the ABC transporter complex RbsABC involved in ribose import. Responsible for energy coupling to the transport system. The protein is Ribose import ATP-binding protein RbsA 2 of Burkholderia ambifaria (strain ATCC BAA-244 / DSM 16087 / CCUG 44356 / LMG 19182 / AMMD) (Burkholderia cepacia (strain AMMD)).